Reading from the N-terminus, the 888-residue chain is Calcium-transporting ATPase 1 (888 aa).

4 consecutive transmembrane segments (helical) span residues 53–75 (IFAQ…SAFV), 79–97 (ADAS…IGVV), 246–266 (VGKY…LIGF), and 283–303 (AVAA…AIGV). Ca(2+)-binding residues include Val284, Ala285, Ile287, and Glu289. Asp331 acts as the 4-aspartylphosphate intermediate in catalysis. 6 helical membrane-spanning segments follow: residues 675–695 (ILFL…AILL), 703–723 (PIHI…SLGV), 747–767 (VPFL…AFIA), 791–811 (LLHA…VHSF), 831–851 (LVFS…IPPL), and 865–885 (WGFV…IKLA). 2 residues coordinate Ca(2+): Asn710 and Asp714.

It belongs to the cation transport ATPase (P-type) (TC 3.A.3) family. Type IIA subfamily.

It localises to the cell membrane. It carries out the reaction Ca(2+)(in) + ATP + H2O = Ca(2+)(out) + ADP + phosphate + H(+). Inhibited by cyclopiazonic acid (CPA). Catalyzes the hydrolysis of ATP coupled with the transport of calcium. This chain is Calcium-transporting ATPase 1, found in Bacillus cereus (strain ATCC 10987 / NRS 248).